The primary structure comprises 704 residues: D-(-)-3-hydroxybutyrate oligomer hydrolase (704 aa).

Residues 1–31 (MTTTNRNNLKLTALTAAVLTLSACGGSDAVA) form the signal peptide. Ser-309 serves as the catalytic Charge relay system.

The protein belongs to the D-(-)-3-hydroxybutyrate oligomer hydrolase family.

The protein resides in the secreted. It carries out the reaction (3R)-hydroxybutanoate dimer + H2O = 2 (R)-3-hydroxybutanoate + H(+). It functions in the pathway lipid metabolism; butanoate metabolism. Its function is as follows. Participates in the degradation of poly-3-hydroxybutyrate (PHB). It works downstream of poly(3-hydroxybutyrate) depolymerase, hydrolyzing D(-)-3-hydroxybutyrate oligomers of various length (3HB-oligomers) into 3HB-monomers. The polypeptide is D-(-)-3-hydroxybutyrate oligomer hydrolase (Albidiferax ferrireducens (strain ATCC BAA-621 / DSM 15236 / T118) (Rhodoferax ferrireducens)).